A 451-amino-acid chain; its full sequence is REST corepressor 3 (451 aa).

Residues 1 to 55 (MPGMMEKGPELLGKSRSANGGAKSPAGGGGSSANGGLHFSEPESGCSSDDEHGDV) are disordered. Residues 55–139 (VGMRVGAEYQ…KSLADLPNFT (85 aa)) enclose the ELM2 domain. K76 is covalently cross-linked (Glycyl lysine isopeptide (Lys-Gly) (interchain with G-Cter in SUMO2)). Residues 140 to 191 (PFPDEWTVEDKVLFEQAFSFHGKSFHRIQQMLPDKTIASLVKYYYSWKKTRS) form the SANT domain. The interval 204-275 (ANRHNQGDSD…SQRSKCRPPK (72 aa)) is disordered. Phosphoserine occurs at positions 212 and 227. Over residues 218–240 (EAHPMDGNDSDYDPKKEAKREGN) the composition is skewed to basic and acidic residues. K249 participates in a covalent cross-link: Glycyl lysine isopeptide (Lys-Gly) (interchain with G-Cter in SUMO2). Over residues 261–273 (QHRHHSQRSKCRP) the composition is skewed to basic residues. The stretch at 293-329 (AANTILRQLDMELISLKRQVQNAKQVNSALKQKMEGG) forms a coiled coil. The interval 333 to 451 (FKPPEAQTPQ…IQTDSQPSLH (119 aa)) is disordered. Over residues 349–361 (PSPPAPSSTPTPT) the composition is skewed to pro residues. Residues 375-384 (RPTLPAAPAL) show a composition bias toward low complexity. Asymmetric dimethylarginine occurs at positions 401 and 413. Over residues 431–451 (VGGQQPPSLIGIQTDSQPSLH) the composition is skewed to polar residues.

It belongs to the CoREST family.

The protein localises to the nucleus. Its function is as follows. May act as a component of a corepressor complex that represses transcription. The chain is REST corepressor 3 (Rcor3) from Mus musculus (Mouse).